The chain runs to 9159 residues: MSQTAKPIFAVVVALIVLISGVAFIGSVSAQQPNLVQNGSFENSSNDFSSDNNYNTLVADSTAITGWRVSSGEVDQVGSYWSPQDGSVSIDLSGSEPGVIEQNVTGLEAGKRYELTYYYSGHRVQEGKYEAGVEIADLNITETASSPGDWTLATHTFTADSTAETLTFTQITPSSGAKGMAIDNVSIVESSDPIDTAAPTVSVNQPAGGATLTTSDVALNASANETGNWTYSVDGGPNQTATDANGTKTLNVTLSGLADGSHTATVYIKDDGGNIGIDTVSFTISSAPTVTTSSGGTNYTASTGGFVVDENLTVTNPDGGTIDGATIAIGSGFNASVDTLAIDEAVAPNNSITSTNYNGTTGVLTLDGTASAAEMQTVLRTVTYAYSGETTASARDIDVSFALGTGGNNSSTPTTAQITVTVSSDTTAPSVTIDQPVEGSTLTTGDVAFDASANKTGNWTYSVDGDPNQTATGANGTQTLNVTLSGLADGSHTATVYIKDDGGNVDTDTVSFTVSTASSLTTSSSKTDYTASDGGFVVDDSLTVTSPDDTLINGATVAIGSGFDASEDTLAVNETVASNNNITNTNYNSATGVLTLDGTASADEMQTVLRTVTYTYSGDATASARDLDVSFSLGTGGNIVFDPTTGNYYELVSETVTWKTAKDEAENRSHLGLQGYLATLTSERENDETASRFTFDKAWIGASDASTEGDWKWVTGPERGTLFWEGDESGSEQNGEYAGWASTDPNAIQGENYAFINQNLEWIDQKNGVNYNYLVEYGGLNGSSSPTAQRTVTVDTEAPTLTTSSGSVTNTTASGGYLVDDKLTVTDPDGGGIDTATVSISQGFDPSADRLSVNTTLATNRGITSTYDDTTGVLNVSANSSATVTADDFQAVLRTVTYNFTGTSVTNESDRTVPIRFALDANQEQVTAYDGHYYEYVSDSVSFDTARSEAENRSHLGLEGYLATLTSEQEDDTIHQQFDQESWIGASDAETEGDWKWVTGPENGTLFWKDGSTQNGEYAGWEGGEPNSQNLDENYAEINFDDYTGWNDQVDNQGYLVEYGGLTTDSAITAQRNVTIDTGAPNVSNVTIRRIDGGGVVTTNDTIEVSATVTDVSSIQSVTASAIAFDAGTVNLSDDGPNSSAADDVYSATFTVGPDPIEQTQSVTVTATDDAGNGGTPPGDLVYDSITVNPEGTTDFRTVRLPRSFENPVVIAKPLESTSSGNVAPDNRRGHTRIRNVQSTSFEIRVEEWSVQDDEDHPAANVSYIVAEAGTTTLDDSTKVSAGTITLNQNDGFQSITFEESLNSPVAFTQPQTVNDPDAVSTRNNNVGSNGLDSKIEDDQNNGADGNPHGTETLGYIAIEQGDSVLGETGFTAGTQGNVDETLTSINFGDSYPAGFVAAMQTTGGTEQSYLRYDDRTDTGVRVRIEEDPVDNSDRHNSETVGYLAWNASTQVTGTRSNELSVDTSAPQIDDLSASFTTGSPPVSAGDEFRVTATVTDAGAVSTVEADVAALDADPGTITLDDLGNDTYEGTFEVGQNPDPTRAVAVTVTDSLGNNASATTIAGSQASWDHEVNGTVQTGTFAGNGSAVDPYIIDSLVDLQAINKNATTRAYNYRLGTDIDASTTRSWNDGKGFAPVGAVNGRDIGEPFSGSLDGDGYTISNLSVDQRSTDTNALGLVGKLDSDGAVRNLTLANASVAGDDDIGAAVGKSAGTVRNVTVSGMVDGDQRIGGVVGTVTSTGTVTNTTAVANTSGNQGVGGLIGESSGTVNNASAGGAVTATGQYAGGLIGDHQSSTAVTDVNASGAVTGASYTGGLVGRGQAGVINASANGDVTSTTGEYVGGLVGQLQAQHGDEEVRNVTASGNVSSGGQYVGGLIGDVRDDGTNYVAMSEAHATGNVNTTYADESGFNNAYVGGLVGHFKGSEFTDISATGDVTSTTGNEVGGLVGRVAMEQERDIVANASATGNVTTTGQRVGGLIGYHRTGTILRNVTATGDVSTDGQRVGGLVGDTDASITDASATGEVTTSTSGEYVGGLVGQLQAQHGDEEVRNVTASGNVSSGGRYVGGLIGDVSDDGTHYVAMSEAHATGHVNTTYADESGFNNAYVGGLVGHFEGSEFTDISATGDVTSTAGNEVGGLVGRVAMEQERDIVANASATGNVTTTGQRVGGLIGYHRTGTILRNVTATGDVSTDGQRVGGLVGDTDASITDASATGEVTTSTTGEYVGGLVGQLRAQHGDEEVRNVTASGNVSSGGQYVGGLMGYVDDNNNRGRYVAMSEAHATGNVNTTYADESGFNNAYVGGLVGHFKGSEFTDISATGDVTSTTGNEVGGLVGRVVMRNNGIVANASATGNVTTTGQRVGGLIGYHRTGTILRNVTATGDVSTDGQRVGGLVGDTDASITDASATGEVTTSTTGEYVGGLVGQLRAQHGDEEVRNVTASGNVSSGGQYVGGLMGYVDDNNNEGRYVAMSEAHATGNVNTTYDGGSNAYVGGLVGRFKGSEFTDISATGDVTSTTGNEVGGLVGRVAMRNNGIVANASATGNVTTTGQQIGGLIGYHQNGDGVETSYARGDVSTDGNYVGGLIGDTNDGSITDSYARGDVNSSGDYVGGLVGEANGDVTRAYASGRVEGDGTDIGGLVGTNNGGTLSDAYWDRGATNQTAATGSGTPPGATGYGTVGDTRALEMQGRAPTQFMAALNYTSPWKLTSTYPIFQRESATSGSLPATVDTIEASTATVVQTQQMTVKLNATINGSRVGPGYLITVSDSNGLAELEGQRALTDQNGTATFTFAEQSAGTFTPTFEAVSDLNVTATATVEVNEGAARTYIREDGTELTAVYSGNGTVDDPYEIDSLADLQAINNNTAARDNHYELVANIDTSATNNTSWNNGNGFEPITEYTGSLDGNGRTISNLSINRSGANGVGLVDTLGSEGTIQNLTIQNASITGDNDLGVAVGINNGRVENVTASGTVSGNDRIGGLVGTVNSGGVITASTAAATTSGSKSIGGLVGQNNGAVNNASASGTVTATGQYAGGLIGDHRSTISIVDTNASGAVTGTSSTGGLIGRAQANVTDSSASGRVNGTTGSNVGGLIGEHDPSQVATIANVSASGDVSTSGGVRVGGLVGSSISGSPVTMLNARAEGNVTTSDLSGTDAFTGGLIGEIQNAKNVTNVSATGQVNASIAGNQVVTGRVGGLIGSFEHESASRIVANASATGDVATDTNGQVGGLIGTYSGGGTVEDSNARGNVSATGQSVGGLLGSADASIIRRSSATGDVNSTGSNVGGLIGKHDPSQVATIANVSASGNVSTRNQGAGGLVGAIQTSPVSISDAGASGDVTAAVGSGRGYVGGLIGEIRNAKNVTNVSASGQVNVSANTGFNGEHVGGLIGVIDHESGANIVANASATGDVNADAAGPTGGLIGGTEGTLGTVQDSYAQGNVSGTGPVGGLIGQTNGDTARVYASGRVEGNSGLGGLIGDNSGQISESYWDKGATAQSDATGSGTPGGATGYGSVGDTTPAPQMQGRAATELMDGLHYTTTWNVTRGYPVLQAQSNGTEQPPRTVDTVTATNASAIQSEQVSVSVTVTTAGTDTGTGTAAGLIVSAQDTGGLTSLNNATAVTNETGTATLTITESDTGTFSPTFTVVGYSTATANATVTVSDGAVRTYVREDGEELTAVYSGNGTADNPYLIDSLADLQAIDNSSAARADNYRLAEDIDASATSDASWNDGSGFEPITPFTGSLDGNDTTISNLSINRSGASTAGLVGALDSNGAIQNLTIQNASVTGSDELGVVAGTNDGTIQNLTVEDASIDGVNDLGVAVGTNNGTVQNVTASGAVRGSDRIGGLVGTVNSGGVVTDATTTATANGSQSIGGLVGESNGAVNNASASGTVTATDQYAGGLIGDHQSTTPVTDVNASGAVTGTSYIGGLLGRGQADVINASAGGSVNGTSGGYVGGLIGQAKSSSGNPITVSNAHASGVVNATNTGTDAYTGGLVGEFQNAGNVTDVSATGDVNASEPEGGNLVGGLFGELHHDSADHILTNASATGDVDATGQRVGGLIGYYKDGDGVETSYARGNVSTDGDYVGGLIGDTNNDGSITDSYARGDVTTSGDKVGGLVGETEDVDVTRSYASGRVKGGSTVGGLVGNNTGQLSGAYWDKGATNQTAATGSGSSGGATGFGTVGDDTQALEMQGRAPTQFMSALDYTSPWKLTSTYPVFQRESNTSGSLLAPVDTIEATGTTAVQTQQITVEVNATINGSPVGPGYLINVSDSNGLAELDSKTALTDANGTATFTFAGPTAGTFEPEFEAVSNSAASATATVTVESGAVRTFIREDGTELTAVYRGNGTADSPYEVDSLADLQAIDNSTAAHGDQYTLVANIDASATDESSWNGGGGFEPIANATDEAFTGTLNGNGHTISNLSVDRSGANRAGLVGTLGSNGTIQNLTIQNASITGNNDVGTAVGTSAGTIQNVTASGTVNGNDRIGGVVGEVTADGLVTDSTASVNTSGNQAIGGLVGQSSGAVNNASASGEVTATSKYAGGLIGDHQSTTPVTDVNASGTVSGTSSAGGLIGRAQANVTDATATGDVVSTSGTKVGGLIGNHQAGQTIVDVSATGTVSSDGDDVGGLVGFTRASVRNATASGEVESTTGANVGGLVGRLSHDDSTHVTNVTATGTVSAGADHVGGLVGFIEDSDDNGNITMSGARATGDIEMTSDDGGPASVGGLVGRFEHGSAITDVSATGDVSSVGGNEVGGLIGRLDQLASTDVLKNASATGDVTTTGQKVGGLIGFHRTGSVDNSHAQGNVSAGSGDNVGGLIGVHGRNGGRVGDSYARGDVNTSGNNVGGLIGRSEGKVLRVYATGRVEGGSAVGGLVGKNDGGQLSESYWDKGATDKSDATGSDTPATVSGYGSVGDTTPAPQMQGRAATELMEGLNYTTTWNVTRGYPVLQAKSTGTEQLPRTVDTVTATNASAIQSEQVSVSVTVTTTDSNIREDFVISVQDTGGLTSLENATAVTNDTGVATFNITESSPDTYTPTFGVAGYSTATVNATVTVDNGAVRTYTREDDTELTAVYRGNGTPDSPYLIDTLADLQSINIDSGTRNEQYRLAADIDASATNESSWNGGRGFEPITDFTGSLNGDGYAISNLSIDRGNEASVGLFGDTNAGSSITNVTLVQPAVTGGQGTGPLVGSHGGSISRTVVTGGTATTEADGEAHLGGLVGILVDDAKITQSHTSAIVDANGHNEAGGFAGDIGSNARVEQVSATGGVKNGGSEIGGLFGNASSGSEIVEAFAAGNVSGTTNVGGLLGRQDGSAVTVDRAYWDEQSTGQTSSAGDTETALPTVKMQGTAATEFMPGLNFTTTWNTTRDYPVLQVQTTGTEQPPRTVDTIDATNASLVQSEQVSVSITVTASEADSRNGFLISVQDAAGLTSLENATAVTNETGTAAFNLTESDAGTFTPTFGVAGDASATTNATLTVKQGAVRTYTREDGTALTAVYTGNGTPESPYEIDSLADLQAIDNSSTARNNSYRLTADIDASATIESSWNDGSGFEPIANATDDDEAFTGSLDGDGHTISNLSIDRSGADTVGLFGELDTAGVLENVTLQNASVTGGNDVGLVAGTSNGTLRNVTTTGTVTGNNRVGGLIGTTELNSVLTESSAAVNTSGSQRVGGLVGTAGGIVNTSTANGTVTATGQYAGGLIGESQGTIPVTNTAASGNVTGTADVGGLIGRTNTTVRNSSASGVVNSTSGDGVGGLIGRSLAAVHDSSASGAVSSTGGNSVGGLIGNAGADVTNSAGRGNVISSTGNEVGGLVGRLEDSSNIRDSHARGTVTAAGSDVGGLAGTIDTGNATRVFATGQVEGNSAVGGLVGKNNGGTLSDVYWDKGATNQTNATGSATPTGADGYGLVNDDTPAERMQGEAATAFMSALNYTTTWNTTRGYPVLQAQATGTEQPPRRVETIDATDASSAQTEQVAISITVTAADSESTDGFVITVRESDGLSGLEDATAVTDQDGTATFSFSESNANSYKPTFGVAGDTAVSTTANITVKEGAVRTYTREDGTNLTGTYIGSGTPDDPYLANSLTDLQVINKNATTRDEHYQLTDDINASATIESWNGGNGFEPIANATDEAFTGTLDGNGTTISNLSIDRSGADSVGLISEVGTSGVMENLTLQNASVIGSNDVGVVAGTSNGTIRNVTATGTVAGDNKIGGLVGASNSSAVVADSSTAVTTSGTRQIGGLVGQSSGSVTNSSASGSVTASGGFAGGLVGDLDVTTPEELANVSASGNVSSGGQYVGGLVGLGTSTSSSGNQLTITEAQASGDVNTTYNGGNDAYVGGLAGKLSNVGNVTDVTATGDVSSTSGNDVGGLAGELVHDSTSFTLRNATATGDVTTTGQRVGGLIGAHRNGQALTNATATGNVSTDGNNVGGLIGYQPDDKTVSDVTATGDVSTEGNNAGGLIGQTRASLSDATASGEVQSSTGDKIGGLVGYLKLSAEKTTNVTATGNVSTDGNNVGGLIGHAEGVESTSQTTISTARASGDVTSTDGNDIGGLIGNASFQNDADTVTNASATGDVGTDSATGSSVGGLIGSQSSGQVRNSYARGNVTTSGDNVGGLVGSAAGKQIVDSYARGNITTEGTNVGGIAGKLSGDVKRVYASGQVTGDNKVGGLVGSGGTLSDAYWDKGASTQTNATGNKSGLGTGTPNGVAGYGSIGSDVPATEMQGQSPSKFMSALNYTSTWSLVNGYPQLRAETAPSFASDTTPPTLTSVTSTDGTTIQLTIDGGVSGIDTSSIDNTDFAVSNNSILSTDTNTSGTDTNTTQTVTLSLSSSVETRPVTVDITSQAGGITDRSGNKLSNITTTLPGIDTVSVSDDTNDDGIVTTGDRVQVTVESNTDTNTDTDTDTTLSSVTVNATDYDDETATLSPNGTNVETGASIHSGIIIVGSTPTDGSDQSLTVNVTDDTGNAAVRTIQVSGVTVDTKAPEITSVSRAGGDSVDVSIQSGLSGIEKSSISAADFTVEPGKVASVNTSAVTDGSNQTQTVRIGLTDAIRGKTPTVTINSSSDGILDKAGNGQGEDSTSSNESSDGTESDQGDPEDDIGGINTGIAPAVTLTTSDLDSSTLSTVDVTYNATGEVGSSDDIEIQLYNDNNSTTTPIATRTVGSVEGLTSLTVPSSAVGGGTFTGRATLVNTSAGNTELANKSKQIVAYENVSTSVTAGSLGGKITVKHDFGSLDPANAQIRVSPITIGSKFTTQTVTPAPAQKQGTVTIPVPKQANSRFNVQTEVVDTSRNRQIQSSLGYGCVGSQRDPCSTVSETGTTVVDATTGNSVGIEVNATVDHNRGAVEWYLHPTGSPEQKDISIVDGVDASTPLAVTIAVDDFDPVFMLGTGNADGWEKTGVDKNTKEISINVTPAEAYVEPDIRNPDPREWPLSDHTASKRYGAIVDMIAVSMEGRVNPGYRNHLDGAFIGTNAQAFSVPKSSAGGSDSAGSLSITVAAPHYETDGTTVNTGFYNARIPKSVLAAWGISPGQVTATYKGESVSGSSLTVEDKKGAIFVSMPVTYSSGTVTVSGSQDSSDTTAPTVSNVSLDSDGTGNLTFTVDSNEQLGVATDNVSVSIDGPNTNDVYTFNRDDLIQSGSGPYTYALDLDSAQPYDNGGGTYTATVDTATDSAGNDGGGSGLTDSHDHTVTGSTPTFVSSGTVTTPENPGGTLLDVNAIDGEGGLFDSGVKYTITGGADSSSFTVDGKTGAVSFADSVDFESPADADGDNAYELDVTASTANANATQSISVTITDVDEQPTGQVNLTGGDPGDRTISIVGNKTGYTFDASKIVDPEGTGVSYTWDFGIGDTSTGSTVTRDYDPGSYLEETTVSPTLTVDDGSKQTVIDVSVTFYSDIDGDGLADDNEATGVPTDNDDDNDGIPDDEDQEPALGEMSSISGTITDTNGSRVTQGDVTIISSDGTHRESVSLDSNGKFDTTVPAGNYRLVVENTSAPVHEREDITVGPQTPTSQNLTLEGSGTVAGKFINPDEKSASNIPVQIASRDGGETYYTKTDSTGEYEVAVEPGDYVVAPLGNDSGNASREVSVELGETIQQSVTLDPQPVETAASLSIASGPGSVTADGHQMVVIPEVTDGLLQIQIANNSDPNRDISVVEDPSELENFGVTNETKFRIRVTVTNYTPHTLFWALRDAEFNSKPNATNPTATDIIITGSPVSLATTSTQQKRVGPLVSEDPSTVSWPSGAADTADSQYNQTVYFSVYDLSTRPESLRDRLTGLILSTNAQRISLPEVSNDRLRTWIAGPRYKTASGTKYEGFYQAQIPQSQLEEWGVADHPTHQLFGEYKSSERNLTVEDVDGGISVDVSNISYSASYVDIKADSTAPVPESALEDDSSNQDSGDDSSNQDSGDDSSSQNDDGDNSSNQDSGDDSSSQNDDGDNSSNQDSGDDSSSQNDDGDNSSNQDSGDDSSSQNDDGDDSSSQNDDGDNSSNQDSGDDSSSQNDDGDNSSNQDSGDDSSSQNDDGDNSSNQDSGDDSSSQNDDGDNKPNSAAAVGAESGSEMGGETGGESQAGGGDGSSGSSSDAAGGGSSGGSSSGDSGGSSSGNSGGSSSGNSGGSSSGSGSSTGSMIADALTVITAPLRWFGSLSTAGKAAVAATTGAGAAGAAYGLGGDRIQTPLNIARRRFQSWLRRRIRGSSRSQISKLLARLRRLKWAKIRTQIAGVRKYFTRSYWRELIAKRRRLGSREGMKNWLKSKYRGNRKRKYRGWLRGRLRSGVNWVAGGLLRGAAPAWLGVVSGPAATAVSVITGEIRRWIEDKAMDRFDSTRKRYAKLAIQSSAWITTVETRLWQLLSGEDSPSSSRSLAAIAGESASELNEVGVDSVDQLASADPEQLASALEIDESAVAEWVNRAGHASGSTERPAFIETRNGKRIQARYEQIAEIVQTGVSIPTISVGSVHSITDIGGRQLARVTGWLQGDVSSILSGAFERIQSFSCRLLYRVSIWIYGPSGAVESIDGIGPEYSDRLVQEGITDVAVLSACSAERLSERINVSSSQTYRWITQATAETPDTRGLHQRLVAGVVRVESVFIAMKTKSSVQLESNRLREDHFSSQPLSEKEMNQLAVVGITTVSQLAAINPDRLGAGVGIDTKTAEEWVEMAQVYEMHLNNNS.

Residues 1–30 (MSQTAKPIFAVVVALIVLISGVAFIGSVSA) form the signal peptide. C-type lectin domains lie at 644 to 776 (TTGN…YLVE) and 929 to 1060 (YDGH…VEYG). Polar residues predominate over residues 1310 to 1332 (QPQTVNDPDAVSTRNNNVGSNGL). The tract at residues 1310–1351 (QPQTVNDPDAVSTRNNNVGSNGLDSKIEDDQNNGADGNPHGT) is disordered. The tract at residues 1756–3380 (VGGLIGESSG…GFNGEHVGGL (1625 aa)) is V-G-G-L motif-rich region. 8 disordered regions span residues 3484–3514 (GATA…PAPQ), 4878–4912 (ESYW…TTPA), 6570–6589 (TDSA…SSGQ), 7047–7097 (TPTV…GINT), 7660–7702 (ATDS…NPGG), 7888–7923 (IDGD…EPAL), 8212–8237 (STQQ…GAAD), and 8369–8614 (DSTA…GSST). Gly residues predominate over residues 3495-3505 (GTPGGATGYGS). Residues 4880–4890 (YWDKGATDKSD) show a composition bias toward basic and acidic residues. 2 stretches are compositionally biased toward polar residues: residues 7048-7057 (PTVTINSSSD) and 7068-7078 (GEDSTSSNESS). Residues 7079–7092 (DGTESDQGDPEDDI) are compositionally biased toward acidic residues. Residues 7681-7698 (VTGSTPTFVSSGTVTTPE) are compositionally biased toward polar residues. The region spanning 7686–7793 (PTFVSSGTVT…ITDVDEQPTG (108 aa)) is the Cadherin domain. Acidic residues-rich tracts occupy residues 7888–7898 (IDGDGLADDNE) and 7905–7920 (DNDD…EDQE). Over residues 8378 to 8390 (ALEDDSSNQDSGD) the composition is skewed to acidic residues. Low complexity-rich tracts occupy residues 8391-8529 (DSSN…SSQN) and 8538-8548 (SAAAVGAESGS). Gly residues-rich tracts occupy residues 8549–8566 (EMGG…GDGS) and 8574–8608 (AGGG…GSSS).

Probably glycosylated with sugar containing sialic acid. This may further contribute to its overall negative charge, thereby creating an aqueous shield covering the cells.

It is found in the secreted. In terms of biological role, may protect the organism from desiccation stress. May also contribute to the rigidity and maintenance of the unique square cell morphology of H.walsbyi. The protein is Halomucin (hmu) of Haloquadratum walsbyi (strain DSM 16790 / HBSQ001).